We begin with the raw amino-acid sequence, 74 residues long: Homeobox protein Hox-B8 (74 aa).

Residues 1–24 are compositionally biased toward low complexity; it reads YTDCKLAASGLGEEAESSEQSPSP. The segment at 1–28 is disordered; it reads YTDCKLAASGLGEEAESSEQSPSPTQLF. The Antp-type hexapeptide signature appears at 27–32; that stretch reads LFPWMR. Positions 39–74 form a DNA-binding region, homeobox; that stretch reads RRRGRQTYSRYQTLELEKEFLFNPYLTRKRRIEVSR.

Belongs to the Antp homeobox family.

The protein resides in the nucleus. Sequence-specific transcription factor which is part of a developmental regulatory system that provides cells with specific positional identities on the anterior-posterior axis. The sequence is that of Homeobox protein Hox-B8 (HOXB8) from Gallus gallus (Chicken).